The chain runs to 684 residues: Extracellular lipase (684 aa).

Residues 1-48 form the signal peptide; it reads MKKKLIYAAVVSALLAGCGGSDDNKGDTSSYLDYLLTGSNAVGPSALA. 2 disordered regions span residues 321–405 and 462–493; these read SIPV…ADWG and QRER…GDRS. The segment covering 385-405 has biased composition (basic and acidic residues); that stretch reads ADCRSDPPERAAGRGEQADWG. The active-site Nucleophile is the Ser-568.

Belongs to the AB hydrolase superfamily. Lipase family. In terms of assembly, monomer.

The protein localises to the secreted. The enzyme catalyses a triacylglycerol + H2O = a diacylglycerol + a fatty acid + H(+). Its function is as follows. The optimum chain lengths for the acyl moiety is C6 for ester hydrolysis and C6 and C8 for triacylglycerol hydrolysis. This is Extracellular lipase from Aeromonas hydrophila.